Consider the following 392-residue polypeptide: Formate-dependent phosphoribosylglycinamide formyltransferase (392 aa).

N(1)-(5-phospho-beta-D-ribosyl)glycinamide is bound by residues 15–16 and Glu75; that span reads EL. ATP contacts are provided by residues Arg107, Lys148, 153-158, 188-191, and Glu196; these read SSGKGQ and EEFL. One can recognise an ATP-grasp domain in the interval 112-302; that stretch reads DLASGELGLH…EFELHLRAVL (191 aa). 2 residues coordinate Mg(2+): Glu261 and Glu273. N(1)-(5-phospho-beta-D-ribosyl)glycinamide contacts are provided by residues Asp280, Lys350, and 357–358; that span reads RR.

It belongs to the PurK/PurT family. In terms of assembly, homodimer.

The enzyme catalyses N(1)-(5-phospho-beta-D-ribosyl)glycinamide + formate + ATP = N(2)-formyl-N(1)-(5-phospho-beta-D-ribosyl)glycinamide + ADP + phosphate + H(+). Its pathway is purine metabolism; IMP biosynthesis via de novo pathway; N(2)-formyl-N(1)-(5-phospho-D-ribosyl)glycinamide from N(1)-(5-phospho-D-ribosyl)glycinamide (formate route): step 1/1. In terms of biological role, involved in the de novo purine biosynthesis. Catalyzes the transfer of formate to 5-phospho-ribosyl-glycinamide (GAR), producing 5-phospho-ribosyl-N-formylglycinamide (FGAR). Formate is provided by PurU via hydrolysis of 10-formyl-tetrahydrofolate. This is Formate-dependent phosphoribosylglycinamide formyltransferase from Synechococcus sp. (strain CC9902).